Here is a 422-residue protein sequence, read N- to C-terminus: Ferrochelatase, mitochondrial (422 aa).

Residues 1-53 (MLSASANMAAALRAAGALLREPLVHGSSRACQPWRCQSGAAVAATTEKVHHAK) constitute a mitochondrion transit peptide. Position 56 is an N6-acetyllysine (K56). Protoporphyrin IX contacts are provided by R114, Y122, and S129. An N6-succinyllysine modification is found at K137. Residue C195 participates in [2Fe-2S] cluster binding. The active site involves H229. N6-acetyllysine; alternate is present on K289. An N6-succinyllysine; alternate modification is found at K289. The active site involves D382. C402, C405, and C410 together coordinate [2Fe-2S] cluster. N6-acetyllysine; alternate is present on K414. K414 carries the N6-succinyllysine; alternate modification.

This sequence belongs to the ferrochelatase family. In terms of assembly, homodimer. Homotetramer. Interaction with PGRMC1; the interaction results in decreased FECH activity. Interacts with ABCB10 and SLC25A37; this interaction forms an oligomeric complex. Forms a complex with ABCB7 and ABCB10, where a dimeric FECH bridges ABCB7 and ABCB10 homodimers; this complex may be required for cellular iron homeostasis, mitochondrial function and heme biosynthesis. Interacts with ABCB7 and ABCB10. [2Fe-2S] cluster is required as a cofactor. As to expression, erythroid and hepatic cells.

It localises to the mitochondrion inner membrane. The enzyme catalyses heme b + 2 H(+) = protoporphyrin IX + Fe(2+). The protein operates within porphyrin-containing compound metabolism; protoheme biosynthesis; protoheme from protoporphyrin-IX: step 1/1. Functionally, catalyzes the ferrous insertion into protoporphyrin IX. The chain is Ferrochelatase, mitochondrial from Mus musculus (Mouse).